The sequence spans 418 residues: UDP-N-acetylglucosamine 1-carboxyvinyltransferase (418 aa).

Residue 22-23 (KN) participates in phosphoenolpyruvate binding. Residue Arg-92 coordinates UDP-N-acetyl-alpha-D-glucosamine. Catalysis depends on Cys-116, which acts as the Proton donor. Position 116 is a 2-(S-cysteinyl)pyruvic acid O-phosphothioketal (Cys-116). The UDP-N-acetyl-alpha-D-glucosamine site is built by Asp-306 and Ile-328.

Belongs to the EPSP synthase family. MurA subfamily.

It is found in the cytoplasm. It carries out the reaction phosphoenolpyruvate + UDP-N-acetyl-alpha-D-glucosamine = UDP-N-acetyl-3-O-(1-carboxyvinyl)-alpha-D-glucosamine + phosphate. Its pathway is cell wall biogenesis; peptidoglycan biosynthesis. Cell wall formation. Adds enolpyruvyl to UDP-N-acetylglucosamine. The protein is UDP-N-acetylglucosamine 1-carboxyvinyltransferase of Shewanella amazonensis (strain ATCC BAA-1098 / SB2B).